The chain runs to 458 residues: Phosphoglucosamine mutase (458 aa).

The Phosphoserine intermediate role is filled by serine 102. The Mg(2+) site is built by serine 102, aspartate 252, aspartate 254, and aspartate 256. Serine 102 bears the Phosphoserine mark.

The protein belongs to the phosphohexose mutase family. Mg(2+) is required as a cofactor. Post-translationally, activated by phosphorylation.

The catalysed reaction is alpha-D-glucosamine 1-phosphate = D-glucosamine 6-phosphate. In terms of biological role, catalyzes the conversion of glucosamine-6-phosphate to glucosamine-1-phosphate. The protein is Phosphoglucosamine mutase of Anaeromyxobacter dehalogenans (strain 2CP-C).